Reading from the N-terminus, the 209-residue chain is Small ribosomal subunit protein uS4 (209 aa).

The disordered stretch occupies residues 22 to 45 (RGRNPLLRKPNPPGQHGMQRKKKS). An S4 RNA-binding domain is found at 93–154 (CRLDNIVYRL…KSRRLAIVTE (62 aa)).

It belongs to the universal ribosomal protein uS4 family. Part of the 30S ribosomal subunit. Contacts protein S5. The interaction surface between S4 and S5 is involved in control of translational fidelity.

Its function is as follows. One of the primary rRNA binding proteins, it binds directly to 16S rRNA where it nucleates assembly of the body of the 30S subunit. With S5 and S12 plays an important role in translational accuracy. The polypeptide is Small ribosomal subunit protein uS4 (Chlamydia muridarum (strain MoPn / Nigg)).